We begin with the raw amino-acid sequence, 116 residues long: NADH-ubiquinone oxidoreductase chain 3 (116 aa).

The next 3 membrane-spanning stretches (helical) occupy residues 3 to 23 (LITTIIAITITLSAVLATISF), 56 to 76 (FFLIAILFLLFDLEIALLLPL), and 85 to 105 (PALTLAWSAAVLALLTLGLIY).

Belongs to the complex I subunit 3 family.

The protein resides in the mitochondrion membrane. The enzyme catalyses a ubiquinone + NADH + 5 H(+)(in) = a ubiquinol + NAD(+) + 4 H(+)(out). In terms of biological role, core subunit of the mitochondrial membrane respiratory chain NADH dehydrogenase (Complex I) that is believed to belong to the minimal assembly required for catalysis. Complex I functions in the transfer of electrons from NADH to the respiratory chain. The immediate electron acceptor for the enzyme is believed to be ubiquinone. This Salmo salar (Atlantic salmon) protein is NADH-ubiquinone oxidoreductase chain 3 (MT-ND3).